Here is a 255-residue protein sequence, read N- to C-terminus: HTH-type transcriptional regulator SkgA (255 aa).

One can recognise an HTH merR-type domain in the interval 3 to 72; that stretch reads VYTVKQMARL…LKDIQAALDQ (70 aa). A DNA-binding region (H-T-H motif) is located at residues 6–25; that stretch reads VKQMARLSGVSVRALHHYDA.

Functionally, regulates the induction of katG (catalase-peroxidase) in stationary phase. In Caulobacter vibrioides (strain ATCC 19089 / CIP 103742 / CB 15) (Caulobacter crescentus), this protein is HTH-type transcriptional regulator SkgA (skgA).